The primary structure comprises 86 residues: Small ribosomal subunit protein bS20 (86 aa).

Belongs to the bacterial ribosomal protein bS20 family.

Binds directly to 16S ribosomal RNA. This Novosphingobium aromaticivorans (strain ATCC 700278 / DSM 12444 / CCUG 56034 / CIP 105152 / NBRC 16084 / F199) protein is Small ribosomal subunit protein bS20.